Reading from the N-terminus, the 61-residue chain is Small ribosomal subunit protein uS14 (61 aa).

Zn(2+) is bound by residues Cys24, Cys27, Cys40, and Cys43.

Belongs to the universal ribosomal protein uS14 family. Zinc-binding uS14 subfamily. In terms of assembly, part of the 30S ribosomal subunit. Contacts proteins S3 and S10. Zn(2+) is required as a cofactor.

Functionally, binds 16S rRNA, required for the assembly of 30S particles and may also be responsible for determining the conformation of the 16S rRNA at the A site. The sequence is that of Small ribosomal subunit protein uS14 from Geobacter sp. (strain M21).